Here is a 436-residue protein sequence, read N- to C-terminus: Trigger factor (436 aa).

In terms of domain architecture, PPIase FKBP-type spans 161–246 (GDQLNIDFVG…VNSVSEAELP (86 aa)).

Belongs to the FKBP-type PPIase family. Tig subfamily.

Its subcellular location is the cytoplasm. It carries out the reaction [protein]-peptidylproline (omega=180) = [protein]-peptidylproline (omega=0). Functionally, involved in protein export. Acts as a chaperone by maintaining the newly synthesized protein in an open conformation. Functions as a peptidyl-prolyl cis-trans isomerase. The sequence is that of Trigger factor from Azotobacter vinelandii (strain DJ / ATCC BAA-1303).